A 442-amino-acid chain; its full sequence is Histidine--tRNA ligase (442 aa).

The protein belongs to the class-II aminoacyl-tRNA synthetase family. Homodimer.

Its subcellular location is the cytoplasm. The enzyme catalyses tRNA(His) + L-histidine + ATP = L-histidyl-tRNA(His) + AMP + diphosphate + H(+). This Helicobacter pylori (strain ATCC 700392 / 26695) (Campylobacter pylori) protein is Histidine--tRNA ligase (hisS).